Reading from the N-terminus, the 1226-residue chain is MNPRQGYSLSGYYTHPFQGYEHRQLRYQQPGPGSSPSSFLLKQIEFLKGQLPEAPVIGKQTPSLPPSLPGLRPRFPVLLASSTRGRQVDIRGVPRGVHLRSQGLQRGFQHPSPRGRSLPQRGVDCLSSHFQELSIYQDQEQRILKFLEELGEGKATTAHDLSGKLGTPKKEINRVLYSLAKKGKLQKEAGTPPLWKIAVSTQAWNQHSGVVRPDGHSQGAPNSDPSLEPEDRNSTSVSEDLLEPFIAVSAQAWNQHSGVVRPDSHSQGSPNSDPGLEPEDSNSTSALEDPLEFLDMAEIKEKICDYLFNVSDSSALNLAKNIGLTKARDINAVLIDMERQGDVYRQGTTPPIWHLTDKKRERMQIKRNTNSVPETAPAAIPETKRNAEFLTCNIPTSNASNNMVTTEKVENGQEPVIKLENRQEARPEPARLKPPVHYNGPSKAGYVDFENGQWATDDIPDDLNSIRAAPGEFRAIMEMPSFYSHGLPRCSPYKKLTECQLKNPISGLLEYAQFASQTCEFNMIEQSGPPHEPRFKFQVVINGREFPPAEAGSKKVAKQDAAMKAMTILLEEAKAKDSGKSEESSHYSTEKESEKTAESQTPTPSATSFFSGKSPVTTLLECMHKLGNSCEFRLLSKEGPAHEPKFQYCVAVGAQTFPSVSAPSKKVAKQMAAEEAMKALHGEATNSMASDNQPEGMISESLDNLESMMPNKVRKIGELVRYLNTNPVGGLLEYARSHGFAAEFKLVDQSGPPHEPKFVYQAKVGGRWFPAVCAHSKKQGKQEAADAALRVLIGENEKAERMGFTEVTPVTGASLRRTMLLLSRSPEAQPKTLPLTGSTFHDQIAMLSHRCFNTLTNSFQPSLLGRKILAAIIMKKDSEDMGVVVSLGTGNRCVKGDSLSLKGETVNDCHAEIISRRGFIRFLYSELMKYNSQTAKDSIFEPAKGGEKLQIKKTVSFHLYISTAPCGDGALFDKSCSDRAMESTESRHYPVFENPKQGKLRTKVENGEGTIPVESSDIVPTWDGIRLGERLRTMSCSDKILRWNVLGLQGALLTHFLQPIYLKSVTLGYLFSQGHLTRAICCRVTRDGSAFEDGLRHPFIVNHPKVGRVSIYDSKRQSGKTKETSVNWCLADGYDLEILDGTRGTVDGPRNELSRVSKKNIFLLFKKLCSFRYRRDLLRLSYGEAKKAARDYETAKNYFKKGLKDMGYGNWISKPQEEKNFYLCPV.

Arg-26 bears the Asymmetric dimethylarginine mark. Residues 133-199 form the Z-binding 1 domain; it reads LSIYQDQEQR…GTPPLWKIAV (67 aa). Residues 133 to 202 are interaction with Z-DNA; sequence LSIYQDQEQR…PLWKIAVSTQ (70 aa). Disordered stretches follow at residues 208-238 and 258-286; these read SGVVRPDGHSQGAPNSDPSLEPEDRNSTSVS and GVVRPDSHSQGSPNSDPGLEPEDSNSTSA. Ser-285 is modified (phosphoserine). In terms of domain architecture, Z-binding 2 spans 293–357; it reads FLDMAEIKEK…TTPPIWHLTD (65 aa). Residues Lys-384 and Lys-408 each participate in a glycyl lysine isopeptide (Lys-Gly) (interchain with G-Cter in SUMO2) cross-link. A Glycyl lysine isopeptide (Lys-Gly) (interchain with G-Cter in SUMO); alternate cross-link involves residue Lys-418. Lys-418 participates in a covalent cross-link: Glycyl lysine isopeptide (Lys-Gly) (interchain with G-Cter in SUMO1); alternate. Lys-418 participates in a covalent cross-link: Glycyl lysine isopeptide (Lys-Gly) (interchain with G-Cter in SUMO2); alternate. Ser-481 is modified (phosphoserine). The 69-residue stretch at 503 to 571 folds into the DRBM 1 domain; it reads NPISGLLEYA…AMKAMTILLE (69 aa). Positions 574-597 are enriched in basic and acidic residues; sequence KAKDSGKSEESSHYSTEKESEKTA. The disordered stretch occupies residues 574–610; that stretch reads KAKDSGKSEESSHYSTEKESEKTAESQTPTPSATSFF. Residue Lys-580 forms a Glycyl lysine isopeptide (Lys-Gly) (interchain with G-Cter in SUMO2) linkage. Residues 600 to 610 are compositionally biased toward polar residues; that stretch reads QTPTPSATSFF. Thr-601 and Thr-603 each carry phosphothreonine. A phosphoserine mark is found at Ser-614, Ser-629, and Ser-636. In terms of domain architecture, DRBM 2 spans 614–682; that stretch reads SPVTTLLECM…AEEAMKALHG (69 aa). The segment at 716 to 725 is N-terminal extension of DRBM 3 and constituent of a bi-partite nuclear localization signal; the sequence is IGELVRYLNT. One can recognise a DRBM 3 domain in the interval 726-794; that stretch reads NPVGGLLEYA…ADAALRVLIG (69 aa). The interval 795 to 801 is C-terminal extension of DRBM 3 and constituent of a bi-partite nuclear localization signal; that stretch reads ENEKAER. Thr-808 is subject to Phosphothreonine. Phosphoserine occurs at positions 814, 823, and 825. Lys-875 is covalently cross-linked (Glycyl lysine isopeptide (Lys-Gly) (interchain with G-Cter in SUMO2)). Residues 886–1221 enclose the A to I editase domain; that stretch reads SLGTGNRCVK…ISKPQEEKNF (336 aa). A Zn(2+)-binding site is contributed by His-910. Glu-912 acts as the Proton donor in catalysis. Zn(2+) is bound by residues Cys-966 and Cys-1036.

In terms of assembly, homodimer. Homodimerization is essential for its catalytic activity. Isoform 5 can form heterodimers with ADARB1/ADAR2. Isoform 1 interacts with ILF2/NF45 and ILF3/NF90. Binding to ILF3/NF90 up-regulates ILF3-mediated gene expression. Isoform 1 and isoform 5 (via DRBM 3 domain) interact with TNPO1. Isoform 5 (via DRBM domains) interacts with XPO5. Isoform 1 and isoform 5 can interact with EIF2AK2/PKR and UPF1. In terms of processing, sumoylation reduces RNA-editing activity. In terms of tissue distribution, ubiquitously expressed, highest levels were found in brain and lung. Isoform 5 is expressed at higher levels in astrocytomas as compared to normal brain tissue and expression increases strikingly with the severity of the tumor, being higher in the most aggressive tumors.

The protein resides in the cytoplasm. It localises to the nucleus. The protein localises to the nucleolus. It carries out the reaction adenosine in double-stranded RNA + H2O + H(+) = inosine in double-stranded RNA + NH4(+). In terms of biological role, catalyzes the hydrolytic deamination of adenosine to inosine in double-stranded RNA (dsRNA) referred to as A-to-I RNA editing. This may affect gene expression and function in a number of ways that include mRNA translation by changing codons and hence the amino acid sequence of proteins since the translational machinery read the inosine as a guanosine; pre-mRNA splicing by altering splice site recognition sequences; RNA stability by changing sequences involved in nuclease recognition; genetic stability in the case of RNA virus genomes by changing sequences during viral RNA replication; and RNA structure-dependent activities such as microRNA production or targeting or protein-RNA interactions. Can edit both viral and cellular RNAs and can edit RNAs at multiple sites (hyper-editing) or at specific sites (site-specific editing). Its cellular RNA substrates include: bladder cancer-associated protein (BLCAP), neurotransmitter receptors for glutamate (GRIA2) and serotonin (HTR2C) and GABA receptor (GABRA3). Site-specific RNA editing of transcripts encoding these proteins results in amino acid substitutions which consequently alters their functional activities. Exhibits low-level editing at the GRIA2 Q/R site, but edits efficiently at the R/G site and HOTSPOT1. Its viral RNA substrates include: hepatitis C virus (HCV), vesicular stomatitis virus (VSV), measles virus (MV), hepatitis delta virus (HDV), and human immunodeficiency virus type 1 (HIV-1). Exhibits either a proviral (HDV, MV, VSV and HIV-1) or an antiviral effect (HCV) and this can be editing-dependent (HDV and HCV), editing-independent (VSV and MV) or both (HIV-1). Impairs HCV replication via RNA editing at multiple sites. Enhances the replication of MV, VSV and HIV-1 through an editing-independent mechanism via suppression of EIF2AK2/PKR activation and function. Stimulates both the release and infectivity of HIV-1 viral particles by an editing-dependent mechanism where it associates with viral RNAs and edits adenosines in the 5'UTR and the Rev and Tat coding sequence. Can enhance viral replication of HDV via A-to-I editing at a site designated as amber/W, thereby changing an UAG amber stop codon to an UIG tryptophan (W) codon that permits synthesis of the large delta antigen (L-HDAg) which has a key role in the assembly of viral particles. However, high levels of ADAR1 inhibit HDV replication. The sequence is that of Double-stranded RNA-specific adenosine deaminase (ADAR) from Homo sapiens (Human).